The chain runs to 134 residues: Calvin cycle protein CP12-3, chloroplastic (134 aa).

The interval 1–21 (MISGSATASHGRVLLPSQRER) is disordered. A chloroplast-targeting transit peptide spans 1–42 (MISGSATASHGRVLLPSQRERRPVSTGSNILRFRETVPRQFS). 2 cysteine pairs are disulfide-bonded: Cys-78/Cys-87 and Cys-120/Cys-129.

The protein belongs to the CP12 family. Monomer. Component of a complex that contains two dimers of PRK, two tetramers of GAPDH and CP12. CP12 associates with GAPDH, causing its conformation to change. This GAPDH/CP12 complex binds PRK to form a half-complex (one unit). This unit probably dimerizes due partially to interactions between the enzymes of each unit. In terms of processing, contains two disulfide bonds; only the oxidized protein, with two disulfide bonds, is active in complex formation. The C-terminal disulfide is involved in the interaction with GAPDH and the N-terminal disulfide mediates the binding of PRK with this binary complex. In terms of tissue distribution, mostly expressed, at low levels, in stems and, to a lesser extent, in leaves and roots.

Its subcellular location is the plastid. It is found in the chloroplast. In terms of biological role, acts as a linker essential in the assembly of a core complex of PRK/GAPDH. Coordinates the reversible inactivation of chloroplast enzymes GAPDH and PRK during darkness in photosynthetic tissues. The protein is Calvin cycle protein CP12-3, chloroplastic (CP12-3) of Arabidopsis thaliana (Mouse-ear cress).